The chain runs to 201 residues: 3-isopropylmalate dehydratase small subunit (201 aa).

The protein belongs to the LeuD family. LeuD type 1 subfamily. In terms of assembly, heterodimer of LeuC and LeuD.

The enzyme catalyses (2R,3S)-3-isopropylmalate = (2S)-2-isopropylmalate. Its pathway is amino-acid biosynthesis; L-leucine biosynthesis; L-leucine from 3-methyl-2-oxobutanoate: step 2/4. Functionally, catalyzes the isomerization between 2-isopropylmalate and 3-isopropylmalate, via the formation of 2-isopropylmaleate. The sequence is that of 3-isopropylmalate dehydratase small subunit from Paramagnetospirillum magneticum (strain ATCC 700264 / AMB-1) (Magnetospirillum magneticum).